The sequence spans 133 residues: Large ribosomal subunit protein bL17 (133 aa).

Belongs to the bacterial ribosomal protein bL17 family. Part of the 50S ribosomal subunit. Contacts protein L32.

This chain is Large ribosomal subunit protein bL17, found in Polaromonas naphthalenivorans (strain CJ2).